Here is a 118-residue protein sequence, read N- to C-terminus: Probable non-functional immunoglobulin lambda variable 2-33 (118 aa).

The N-terminal stretch at 1 to 19 (MAWALLLLTLLTQGTGSWA) is a signal peptide. Residues 20-44 (QSALTQPPFVSGAPGQSVTISCTGT) form a framework-1 region. One can recognise an Ig-like domain in the interval 34–118 (GQSVTISCTG…CSLYSSSYTF (85 aa)). Residues C41 and C109 are joined by a disulfide bond. The tract at residues 45–53 (SSDVGDYDH) is complementarity-determining-1. A framework-2 region spans residues 54–70 (VFWYQKRLSTTSRLLIY). A complementarity-determining-2 region spans residues 71–73 (NVN). Residues 74-109 (TRPSGISDLFSGSKSGNMASLTISGLKSEVEANYHC) form a framework-3 region. Residues 110 to 118 (SLYSSSYTF) form a complementarity-determining-3 region.

Immunoglobulins are composed of two identical heavy chains and two identical light chains; disulfide-linked.

It is found in the secreted. It localises to the cell membrane. Functionally, probable non-functional open reading frame (ORF) of V region of the variable domain of immunoglobulin light chains. Non-functional ORF generally cannot participate in the synthesis of a productive immunoglobulin chain due to altered V-(D)-J or switch recombination and/or splicing site (at mRNA level) and/or conserved amino acid change (protein level). Immunoglobulins, also known as antibodies, are membrane-bound or secreted glycoproteins produced by B lymphocytes. In the recognition phase of humoral immunity, the membrane-bound immunoglobulins serve as receptors which, upon binding of a specific antigen, trigger the clonal expansion and differentiation of B lymphocytes into immunoglobulins-secreting plasma cells. Secreted immunoglobulins mediate the effector phase of humoral immunity, which results in the elimination of bound antigens. The antigen binding site is formed by the variable domain of one heavy chain, together with that of its associated light chain. Thus, each immunoglobulin has two antigen binding sites with remarkable affinity for a particular antigen. The variable domains are assembled by a process called V-(D)-J rearrangement and can then be subjected to somatic hypermutations which, after exposure to antigen and selection, allow affinity maturation for a particular antigen. The sequence is that of Probable non-functional immunoglobulin lambda variable 2-33 from Homo sapiens (Human).